The following is a 774-amino-acid chain: DNA ligase 3 (774 aa).

The segment at 1–25 (MPPKKRMKNGSSLKSTSKKGEKSRN) is disordered. Lys433 serves as the catalytic N6-AMP-lysine intermediate.

This sequence belongs to the ATP-dependent DNA ligase family.

It localises to the nucleus. The catalysed reaction is ATP + (deoxyribonucleotide)n-3'-hydroxyl + 5'-phospho-(deoxyribonucleotide)m = (deoxyribonucleotide)n+m + AMP + diphosphate.. The chain is DNA ligase 3 (adl1) from Schizosaccharomyces pombe (strain 972 / ATCC 24843) (Fission yeast).